The sequence spans 194 residues: Large ribosomal subunit protein bL25 (194 aa).

The protein belongs to the bacterial ribosomal protein bL25 family. CTC subfamily. As to quaternary structure, part of the 50S ribosomal subunit; part of the 5S rRNA/L5/L18/L25 subcomplex. Contacts the 5S rRNA. Binds to the 5S rRNA independently of L5 and L18.

In terms of biological role, this is one of the proteins that binds to the 5S RNA in the ribosome where it forms part of the central protuberance. The sequence is that of Large ribosomal subunit protein bL25 from Thermobifida fusca (strain YX).